Here is a 137-residue protein sequence, read N- to C-terminus: Large ribosomal subunit protein uL16 (137 aa).

This sequence belongs to the universal ribosomal protein uL16 family. As to quaternary structure, part of the 50S ribosomal subunit.

Functionally, binds 23S rRNA and is also seen to make contacts with the A and possibly P site tRNAs. The polypeptide is Large ribosomal subunit protein uL16 (Legionella pneumophila (strain Paris)).